The chain runs to 602 residues: Glutamate-rich protein 6 (602 aa).

The segment at 22–67 is disordered; sequence LRPRLTSVSSPSLSSTPPPSPLSSPSWSEEELPAPRSDGSPASSIS. Low complexity predominate over residues 25–36; the sequence is RLTSVSSPSLSS.

This sequence belongs to the ERICH6 family.

It localises to the nucleus. This is Glutamate-rich protein 6 (Erich6) from Rattus norvegicus (Rat).